Reading from the N-terminus, the 611-residue chain is UvrABC system protein C (611 aa).

The GIY-YIG domain occupies 6–84 (NNPGVYRMFN…IKRSRPRFNV (79 aa)). Residues 194 to 229 (QSVKDHLAAAMQAASADLDFEHAAVYRDRLAALSHV) enclose the UVR domain.

Belongs to the UvrC family. As to quaternary structure, interacts with UvrB in an incision complex.

Its subcellular location is the cytoplasm. Functionally, the UvrABC repair system catalyzes the recognition and processing of DNA lesions. UvrC both incises the 5' and 3' sides of the lesion. The N-terminal half is responsible for the 3' incision and the C-terminal half is responsible for the 5' incision. The chain is UvrABC system protein C from Brucella suis biovar 1 (strain 1330).